The chain runs to 391 residues: Polyisoprenyl-teichoic acid--peptidoglycan teichoic acid transferase TagV (391 aa).

Over 1–23 (MAERVRVRVRKKKKSKRRKILKR) the chain is Cytoplasmic. The chain crosses the membrane as a helical; Signal-anchor for type II membrane protein span at residues 24–44 (IMLLFALALLVVVGLGGYKLY). The Extracellular segment spans residues 45–391 (KTINAADESY…TTNSTTDSSY (347 aa)). The segment at 329 to 391 (DYTPDTSTGT…TTNSTTDSSY (63 aa)) is disordered. The segment covering 333–391 (DTSTGTSGTEDGTDSSSSSGSTGSTGTTTDGTTNGSSYSNDSSTSSNNSTTNSTTDSSY) has biased composition (low complexity).

The protein belongs to the LytR/CpsA/Psr (LCP) family.

The protein resides in the cell membrane. Its pathway is cell wall biogenesis. Functionally, may catalyze the final step in cell wall teichoic acid biosynthesis, the transfer of the anionic cell wall polymers (APs) from their lipid-linked precursor to the cell wall peptidoglycan (PG). The polypeptide is Polyisoprenyl-teichoic acid--peptidoglycan teichoic acid transferase TagV (Bacillus subtilis (strain 168)).